Reading from the N-terminus, the 261-residue chain is Pantothenate synthetase (261 aa).

29 to 36 is a binding site for ATP; sequence MGALHNGH. H36 acts as the Proton donor in catalysis. Q60 is a (R)-pantoate binding site. Q60 provides a ligand contact to beta-alanine. 147-150 contributes to the ATP binding site; sequence GEKD. Q153 serves as a coordination point for (R)-pantoate. Position 184–187 (184–187) interacts with ATP; the sequence is LSSR.

Belongs to the pantothenate synthetase family. Homodimer.

Its subcellular location is the cytoplasm. The enzyme catalyses (R)-pantoate + beta-alanine + ATP = (R)-pantothenate + AMP + diphosphate + H(+). It functions in the pathway cofactor biosynthesis; (R)-pantothenate biosynthesis; (R)-pantothenate from (R)-pantoate and beta-alanine: step 1/1. Its function is as follows. Catalyzes the condensation of pantoate with beta-alanine in an ATP-dependent reaction via a pantoyl-adenylate intermediate. This chain is Pantothenate synthetase, found in Francisella tularensis subsp. novicida (strain U112).